Reading from the N-terminus, the 288-residue chain is Bifunctional protein FolD (288 aa).

Residues Gly-164–Ser-166, Ser-193, and Ile-234 contribute to the NADP(+) site.

This sequence belongs to the tetrahydrofolate dehydrogenase/cyclohydrolase family. As to quaternary structure, homodimer.

The enzyme catalyses (6R)-5,10-methylene-5,6,7,8-tetrahydrofolate + NADP(+) = (6R)-5,10-methenyltetrahydrofolate + NADPH. The catalysed reaction is (6R)-5,10-methenyltetrahydrofolate + H2O = (6R)-10-formyltetrahydrofolate + H(+). The protein operates within one-carbon metabolism; tetrahydrofolate interconversion. Its function is as follows. Catalyzes the oxidation of 5,10-methylenetetrahydrofolate to 5,10-methenyltetrahydrofolate and then the hydrolysis of 5,10-methenyltetrahydrofolate to 10-formyltetrahydrofolate. The sequence is that of Bifunctional protein FolD from Nitratidesulfovibrio vulgaris (strain DSM 19637 / Miyazaki F) (Desulfovibrio vulgaris).